Consider the following 359-residue polypeptide: Transcription factor MYB115 (359 aa).

Polar residues predominate over residues 1–17; it reads MYHQNLISSTPNQNSNP. The interval 1 to 21 is disordered; that stretch reads MYHQNLISSTPNQNSNPHDWD. 2 HTH myb-type domains span residues 153-208 and 209-259; these read KDII…RPNI and KKND…RRLH. 2 DNA-binding regions (H-T-H motif) span residues 181–204 and 232–255; these read WTSI…HNHL and WTEI…NATK.

Accumulates in reproductive organs (e.g. flowers and siliques). Expressed at very low levels in vegetative organs.

The protein localises to the nucleus. Functionally, transcription activator that recognizes the motif 5'-TAACGG-3' in the promoter of target genes. Promotes vegetative-to-embryonic transition and the formation of somatic embryos from root explants in a WUS-independent manner. Together with MYB118, activates the transcription of S-ACP-DES2/AAD2 and S-ACP-DES3/AAD3 thus promoting the biosynthesis of omega-7 monounsaturated fatty acid in seed endosperm. In Arabidopsis thaliana (Mouse-ear cress), this protein is Transcription factor MYB115.